Reading from the N-terminus, the 356-residue chain is Histidinol-phosphate aminotransferase (356 aa).

N6-(pyridoxal phosphate)lysine is present on lysine 214.

Belongs to the class-II pyridoxal-phosphate-dependent aminotransferase family. Histidinol-phosphate aminotransferase subfamily. In terms of assembly, homodimer. Pyridoxal 5'-phosphate serves as cofactor.

It catalyses the reaction L-histidinol phosphate + 2-oxoglutarate = 3-(imidazol-4-yl)-2-oxopropyl phosphate + L-glutamate. It functions in the pathway amino-acid biosynthesis; L-histidine biosynthesis; L-histidine from 5-phospho-alpha-D-ribose 1-diphosphate: step 7/9. This is Histidinol-phosphate aminotransferase (hisC) from Escherichia coli O157:H7.